A 262-amino-acid chain; its full sequence is Endoplasmic reticulum chaperone BiP (262 aa).

8–11 (GSTR) is an ATP binding site. The segment at 53-63 (QDTGDLVLLDV) is interdomain linker. The substrate-binding (SBD) stretch occupies residues 64-144 (CPLTLGIETV…PRGVPQIEVT (81 aa)). The residue at position 91 (lysine 91) is an N6-succinyllysine. Residue arginine 136 is modified to Omega-N-methylarginine. Position 162 is an O-AMP-threonine; alternate (threonine 162). Threonine 162 carries the phosphothreonine; alternate modification. Position 229 is an N6,N6,N6-trimethyllysine; by METTL21A; in vitro (lysine 229). Lysine 229 is modified (N6,N6-dimethyllysine; alternate). Lysine 229 carries the N6-methyllysine; alternate modification. Lysine 235 bears the N6-methyllysine mark.

This sequence belongs to the heat shock protein 70 family. As to quaternary structure, monomer and homooligomer; homooligomerization via the interdomain linker inactivates the chaperone activity and acts as a storage of HSPA5/BiP molecules. Interacts with DNAJC1 (via J domain). Component of an EIF2 complex at least composed of CELF1/CUGBP1, CALR, CALR3, EIF2S1, EIF2S2, HSP90B1 and HSPA5. Part of a large chaperone multiprotein complex comprising DNAJB11, HSP90B1, HSPA5, HYOU, PDIA2, PDIA4, PDIA6, PPIB, SDF2L1, UGGT1 and very small amounts of ERP29, but not, or at very low levels, CALR nor CANX. Interacts with TMEM132A and TRIM21. May form a complex with ERLEC1, OS9, SEL1L and SYVN1. Interacts with DNAJC10. Interacts with DNAJB9/ERdj4; leading to recruit HSPA5/BiP to ERN1/IRE1. Interacts with ERN1/IRE1 (via luminal domain); the interaction takes place following interaction with DNAJB9/ERdj4 and leads to inactivate ERN1/IRE1, the interaction also competitively inhibits ERN1 interaction with MANF. Interacts directly with MANF (via SAP domain); the interaction inhibits ATP binding to HSPA5/BiP and subsequent nucleotide exchange. Interacts with EIF2AK3/PERK (via luminal domain); interaction leads to inactivate EIF2AK3/PERK. Interacts with MX1. Interacts with METTL23. Interacts with CEMIP; the interaction induces calcium leakage from the endoplasmic reticulum and cell migration. Interacts with PCSK4 form; the interaction takes place in the endoplasmic reticulum. Interacts with CIPC. Interacts with CCDC88B (via C-terminus); the interaction opposes ERN1-mediated JNK activation, protecting against apoptosis. Interacts with INPP5K; necessary for INPP5K localization at the endoplasmic reticulum. Interacts with MANF; the interaction is direct. Interacts with LOXL2; leading to activate the ERN1/IRE1-XBP1 pathway of the unfolded protein response. Interacts with CLU under stressed condition; interaction increases CLU protein stability; facilitates its retrotranslocation and redistribution to the mitochondria; cooperatively suppress stress-induced apoptosis by stabilizing mitochondrial membrane integrity. Interacts with CCDC47. Interacts with CLN3. Interacts with ELAPOR1; may regulate the function of HSPA5 in apoptosis and cell proliferation. Interacts with CASP7. Interacts with ILDR2; the interaction stabilizes ILDR2 expression. Interacts with ADAM7. Post-translationally, in unstressed cells, AMPylation at Thr-162 by FICD inactivates the chaperome activity: AMPylated form is locked in a relatively inert state and only weakly stimulated by J domain-containing proteins. In response to endoplasmic reticulum stress, de-AMPylation by the same protein, FICD, restores the chaperone activity.

The protein resides in the endoplasmic reticulum lumen. It is found in the melanosome. Its subcellular location is the cytoplasm. The protein localises to the cell surface. It carries out the reaction ATP + H2O = ADP + phosphate + H(+). With respect to regulation, the chaperone activity is regulated by ATP-induced allosteric coupling of the nucleotide-binding (NBD) and substrate-binding (SBD) domains. In the ADP-bound and nucleotide-free (apo) states, the two domains have little interaction. In contrast, in the ATP-bound state the two domains are tightly coupled, which results in drastically accelerated kinetics in both binding and release of polypeptide substrates. J domain-containing co-chaperones (DNAJB9/ERdj4 or DNAJC10/ERdj5) stimulate the ATPase activity and are required for efficient substrate recognition by HSPA5/BiP. Homooligomerization inactivates participating HSPA5/BiP protomers and probably act as reservoirs to store HSPA5/BiP molecules when they are not needed by the cell. In terms of biological role, endoplasmic reticulum chaperone that plays a key role in protein folding and quality control in the endoplasmic reticulum lumen. Involved in the correct folding of proteins and degradation of misfolded proteins via its interaction with DNAJC10/ERdj5, probably to facilitate the release of DNAJC10/ERdj5 from its substrate. Acts as a key repressor of the EIF2AK3/PERK and ERN1/IRE1-mediated unfolded protein response (UPR). In the unstressed endoplasmic reticulum, recruited by DNAJB9/ERdj4 to the luminal region of ERN1/IRE1, leading to disrupt the dimerization of ERN1/IRE1, thereby inactivating ERN1/IRE1. Also binds and inactivates EIF2AK3/PERK in unstressed cells. Accumulation of misfolded protein in the endoplasmic reticulum causes release of HSPA5/BiP from ERN1/IRE1 and EIF2AK3/PERK, allowing their homodimerization and subsequent activation. Plays an auxiliary role in post-translational transport of small presecretory proteins across endoplasmic reticulum (ER). May function as an allosteric modulator for SEC61 channel-forming translocon complex, likely cooperating with SEC62 to enable the productive insertion of these precursors into SEC61 channel. Appears to specifically regulate translocation of precursors having inhibitory residues in their mature region that weaken channel gating. May also play a role in apoptosis and cell proliferation. In Sus scrofa (Pig), this protein is Endoplasmic reticulum chaperone BiP.